The primary structure comprises 571 residues: Proline--tRNA ligase (571 aa).

This sequence belongs to the class-II aminoacyl-tRNA synthetase family. ProS type 1 subfamily. In terms of assembly, homodimer.

Its subcellular location is the cytoplasm. The catalysed reaction is tRNA(Pro) + L-proline + ATP = L-prolyl-tRNA(Pro) + AMP + diphosphate. Catalyzes the attachment of proline to tRNA(Pro) in a two-step reaction: proline is first activated by ATP to form Pro-AMP and then transferred to the acceptor end of tRNA(Pro). As ProRS can inadvertently accommodate and process non-cognate amino acids such as alanine and cysteine, to avoid such errors it has two additional distinct editing activities against alanine. One activity is designated as 'pretransfer' editing and involves the tRNA(Pro)-independent hydrolysis of activated Ala-AMP. The other activity is designated 'posttransfer' editing and involves deacylation of mischarged Ala-tRNA(Pro). The misacylated Cys-tRNA(Pro) is not edited by ProRS. The chain is Proline--tRNA ligase from Glaesserella parasuis serovar 5 (strain SH0165) (Haemophilus parasuis).